Here is a 123-residue protein sequence, read N- to C-terminus: D-ribose pyranase (123 aa).

His20 functions as the Proton donor in the catalytic mechanism. Residues Asp28, His90, and 112–114 contribute to the substrate site; that span reads YAN.

It belongs to the RbsD / FucU family. RbsD subfamily. Homodecamer.

The protein localises to the cytoplasm. It carries out the reaction beta-D-ribopyranose = beta-D-ribofuranose. The protein operates within carbohydrate metabolism; D-ribose degradation; D-ribose 5-phosphate from beta-D-ribopyranose: step 1/2. Functionally, catalyzes the interconversion of beta-pyran and beta-furan forms of D-ribose. In Corynebacterium glutamicum (strain ATCC 13032 / DSM 20300 / JCM 1318 / BCRC 11384 / CCUG 27702 / LMG 3730 / NBRC 12168 / NCIMB 10025 / NRRL B-2784 / 534), this protein is D-ribose pyranase.